The following is a 252-amino-acid chain: F-box/SPRY domain-containing protein 1 (252 aa).

One can recognise an F-box domain in the interval 1 to 48; the sequence is MVDPLCNYNVLESIFSYLELNDLNRCSQVCKSWYHFLNDENSDVWRWH. The region spanning 58-250 is the B30.2/SPRY domain; it reads VKSDLLSSVT…VSMVYLGTPL (193 aa).

This sequence belongs to the FBXO45/Fsn family. Component of an E3 ubiquitin ligase complex composed of hiw and Fsn.

The protein localises to the synapse. The protein operates within protein modification; protein ubiquitination. Functionally, required in the presynaptic motoneuron to down-regulate the levels of wnd and restrain synaptic terminal growth at the neuromuscular junction (NMJ). The polypeptide is F-box/SPRY domain-containing protein 1 (Drosophila grimshawi (Hawaiian fruit fly)).